A 128-amino-acid polypeptide reads, in one-letter code: Ribonuclease P protein component (128 aa).

The protein belongs to the RnpA family. In terms of assembly, consists of a catalytic RNA component (M1 or rnpB) and a protein subunit.

It carries out the reaction Endonucleolytic cleavage of RNA, removing 5'-extranucleotides from tRNA precursor.. Functionally, RNaseP catalyzes the removal of the 5'-leader sequence from pre-tRNA to produce the mature 5'-terminus. It can also cleave other RNA substrates such as 4.5S RNA. The protein component plays an auxiliary but essential role in vivo by binding to the 5'-leader sequence and broadening the substrate specificity of the ribozyme. This Parasynechococcus marenigrum (strain WH8102) protein is Ribonuclease P protein component.